Reading from the N-terminus, the 441-residue chain is ATP-dependent protease ATPase subunit HslU (441 aa).

Residues Ile17, 60–65, Asp253, Glu319, and Arg391 each bind ATP; that span reads GVGKTE.

The protein belongs to the ClpX chaperone family. HslU subfamily. A double ring-shaped homohexamer of HslV is capped on each side by a ring-shaped HslU homohexamer. The assembly of the HslU/HslV complex is dependent on binding of ATP.

Its subcellular location is the cytoplasm. ATPase subunit of a proteasome-like degradation complex; this subunit has chaperone activity. The binding of ATP and its subsequent hydrolysis by HslU are essential for unfolding of protein substrates subsequently hydrolyzed by HslV. HslU recognizes the N-terminal part of its protein substrates and unfolds these before they are guided to HslV for hydrolysis. The polypeptide is ATP-dependent protease ATPase subunit HslU (Legionella pneumophila (strain Paris)).